A 216-amino-acid chain; its full sequence is Octanoyltransferase (216 aa).

The region spanning 31–205 (STTRDEVWLV…ELVTLLDYEQ (175 aa)) is the BPL/LPL catalytic domain. Residues 70 to 77 (RGGQVTYH), 137 to 139 (SLG), and 150 to 152 (GLA) each bind substrate. The active-site Acyl-thioester intermediate is the C168.

Belongs to the LipB family.

The protein localises to the cytoplasm. It catalyses the reaction octanoyl-[ACP] + L-lysyl-[protein] = N(6)-octanoyl-L-lysyl-[protein] + holo-[ACP] + H(+). It functions in the pathway protein modification; protein lipoylation via endogenous pathway; protein N(6)-(lipoyl)lysine from octanoyl-[acyl-carrier-protein]: step 1/2. In terms of biological role, catalyzes the transfer of endogenously produced octanoic acid from octanoyl-acyl-carrier-protein onto the lipoyl domains of lipoate-dependent enzymes. Lipoyl-ACP can also act as a substrate although octanoyl-ACP is likely to be the physiological substrate. This chain is Octanoyltransferase, found in Vibrio cholerae serotype O1 (strain ATCC 39315 / El Tor Inaba N16961).